A 291-amino-acid polypeptide reads, in one-letter code: 4-diphosphocytidyl-2-C-methyl-D-erythritol kinase (291 aa).

Residue Lys-10 is part of the active site. Pro-94–Ser-104 lines the ATP pocket. Residue Asp-136 is part of the active site.

The protein belongs to the GHMP kinase family. IspE subfamily.

The enzyme catalyses 4-CDP-2-C-methyl-D-erythritol + ATP = 4-CDP-2-C-methyl-D-erythritol 2-phosphate + ADP + H(+). Its pathway is isoprenoid biosynthesis; isopentenyl diphosphate biosynthesis via DXP pathway; isopentenyl diphosphate from 1-deoxy-D-xylulose 5-phosphate: step 3/6. Functionally, catalyzes the phosphorylation of the position 2 hydroxy group of 4-diphosphocytidyl-2C-methyl-D-erythritol. The chain is 4-diphosphocytidyl-2-C-methyl-D-erythritol kinase from Listeria welshimeri serovar 6b (strain ATCC 35897 / DSM 20650 / CCUG 15529 / CIP 8149 / NCTC 11857 / SLCC 5334 / V8).